The chain runs to 320 residues: Lipoyl synthase (320 aa).

Basic and acidic residues predominate over residues 1–24; that stretch reads MIGKLVRDLKIPDQRHPEKAHRPD. Residues 1 to 30 form a disordered region; that stretch reads MIGKLVRDLKIPDQRHPEKAHRPDNVQPKK. Cys-60, Cys-65, Cys-71, Cys-86, Cys-90, Cys-93, and Ser-300 together coordinate [4Fe-4S] cluster. Positions 72 to 289 constitute a Radical SAM core domain; the sequence is WSQGHATMMI…EKAAYGKGFL (218 aa).

This sequence belongs to the radical SAM superfamily. Lipoyl synthase family. The cofactor is [4Fe-4S] cluster.

The protein localises to the cytoplasm. It catalyses the reaction [[Fe-S] cluster scaffold protein carrying a second [4Fe-4S](2+) cluster] + N(6)-octanoyl-L-lysyl-[protein] + 2 oxidized [2Fe-2S]-[ferredoxin] + 2 S-adenosyl-L-methionine + 4 H(+) = [[Fe-S] cluster scaffold protein] + N(6)-[(R)-dihydrolipoyl]-L-lysyl-[protein] + 4 Fe(3+) + 2 hydrogen sulfide + 2 5'-deoxyadenosine + 2 L-methionine + 2 reduced [2Fe-2S]-[ferredoxin]. It functions in the pathway protein modification; protein lipoylation via endogenous pathway; protein N(6)-(lipoyl)lysine from octanoyl-[acyl-carrier-protein]: step 2/2. Its function is as follows. Catalyzes the radical-mediated insertion of two sulfur atoms into the C-6 and C-8 positions of the octanoyl moiety bound to the lipoyl domains of lipoate-dependent enzymes, thereby converting the octanoylated domains into lipoylated derivatives. The chain is Lipoyl synthase from Cereibacter sphaeroides (strain ATCC 17029 / ATH 2.4.9) (Rhodobacter sphaeroides).